The chain runs to 396 residues: Putative protein IntB (396 aa).

One can recognise a Core-binding (CB) domain in the interval 71-151; that stretch reads RTFKEVAIEW…RTTAIMRYAV (81 aa). The Tyr recombinase domain maps to 174–367; it reads QHRPALELKR…EHLEERRLML (194 aa). Active-site residues include arginine 213, lysine 252, histidine 316, arginine 319, and histidine 343. The active-site O-(3'-phospho-DNA)-tyrosine intermediate is the tyrosine 353.

This sequence belongs to the 'phage' integrase family.

This chain is Putative protein IntB (intB), found in Escherichia coli (strain K12).